A 171-amino-acid chain; its full sequence is Protein TraV (171 aa).

The first 18 residues, 1–18 (MKQTSFFIPLLGTLLLYG), serve as a signal peptide directing secretion. Cys-19 is lipidated: N-palmitoyl cysteine. Cys-19 carries the S-diacylglycerol cysteine lipid modification.

The protein localises to the cell outer membrane. Functionally, involved in F pilus assembly. Appears to facilitate the polymerization of inner membrane-located pilin subunits into extracellular F pilus filaments. The sequence is that of Protein TraV (traV) from Escherichia coli (strain K12).